We begin with the raw amino-acid sequence, 174 residues long: CDP-archaeol synthase (174 aa).

5 consecutive transmembrane segments (helical) span residues 14-34 (ILEA…PVVA), 59-79 (IEGL…AALA), 83-103 (MLLA…DMAG), 118-138 (APLL…IALG), and 149-169 (AAAA…LLGL).

Belongs to the CDP-archaeol synthase family. The cofactor is Mg(2+).

The protein resides in the cell membrane. It catalyses the reaction 2,3-bis-O-(geranylgeranyl)-sn-glycerol 1-phosphate + CTP + H(+) = CDP-2,3-bis-O-(geranylgeranyl)-sn-glycerol + diphosphate. It functions in the pathway membrane lipid metabolism; glycerophospholipid metabolism. In terms of biological role, catalyzes the formation of CDP-2,3-bis-(O-geranylgeranyl)-sn-glycerol (CDP-archaeol) from 2,3-bis-(O-geranylgeranyl)-sn-glycerol 1-phosphate (DGGGP) and CTP. This reaction is the third ether-bond-formation step in the biosynthesis of archaeal membrane lipids. In Aeropyrum pernix (strain ATCC 700893 / DSM 11879 / JCM 9820 / NBRC 100138 / K1), this protein is CDP-archaeol synthase.